The chain runs to 597 residues: Elongation factor 4 (597 aa).

The tr-type G domain occupies lysine 2–lysine 184. Residues aspartate 14–threonine 19 and asparagine 131–aspartate 134 each bind GTP.

This sequence belongs to the TRAFAC class translation factor GTPase superfamily. Classic translation factor GTPase family. LepA subfamily.

It is found in the cell inner membrane. It carries out the reaction GTP + H2O = GDP + phosphate + H(+). Its function is as follows. Required for accurate and efficient protein synthesis under certain stress conditions. May act as a fidelity factor of the translation reaction, by catalyzing a one-codon backward translocation of tRNAs on improperly translocated ribosomes. Back-translocation proceeds from a post-translocation (POST) complex to a pre-translocation (PRE) complex, thus giving elongation factor G a second chance to translocate the tRNAs correctly. Binds to ribosomes in a GTP-dependent manner. The sequence is that of Elongation factor 4 from Chromobacterium violaceum (strain ATCC 12472 / DSM 30191 / JCM 1249 / CCUG 213 / NBRC 12614 / NCIMB 9131 / NCTC 9757 / MK).